An 85-amino-acid chain; its full sequence is Large ribosomal subunit protein bL27 (85 aa).

Residues 1–21 (MAHKKAGGSTRNGRDSESKRL) are disordered.

This sequence belongs to the bacterial ribosomal protein bL27 family.

The polypeptide is Large ribosomal subunit protein bL27 (Pseudomonas entomophila (strain L48)).